Reading from the N-terminus, the 545-residue chain is B3 domain-containing protein Os03g0620500 (545 aa).

The TF-B3 1 DNA-binding region spans 26–119; sequence MKCFHRQMSA…RRASGVQERN (94 aa). Residues 111 to 188 are disordered; the sequence is RASGVQERNA…SSSEHESSYD (78 aa). The segment covering 173–186 has biased composition (basic and acidic residues); it reads EEAKESSSSEHESS. Residues 231–331 constitute a DNA-binding region (TF-B3 2); the sequence is VTTMKHSNVN…RATVHLLRET (101 aa). Residues 368 to 400 form a disordered region; it reads RRGTMEPSTTNVKKEADNEQCNNGQGKRQEPLN. Positions 441–542 form a DNA-binding region, TF-B3 3; sequence YVSIMNKSNV…AMKVHIIRHN (102 aa).

Its subcellular location is the nucleus. This is B3 domain-containing protein Os03g0620500 from Oryza sativa subsp. japonica (Rice).